Here is a 29-residue protein sequence, read N- to C-terminus: Cyclotide mang-A (29 aa).

The segment at residues 1-29 is a cross-link (cyclopeptide (Gly-Asp)); that stretch reads GFPTCGETCTLGTCNTPGCTCSWPICTRD. Cystine bridges form between Cys5–Cys19, Cys9–Cys21, and Cys14–Cys26.

It belongs to the cyclotide family. Moebius subfamily. In terms of processing, this is a cyclic peptide.

In terms of biological role, probably participates in a plant defense mechanism. This chain is Cyclotide mang-A, found in Melicytus angustifolius (Hymenanthera angustifolia).